The chain runs to 251 residues: Probable transcriptional regulatory protein Cpar_0525 (251 aa).

Belongs to the TACO1 family.

Its subcellular location is the cytoplasm. This Chlorobaculum parvum (strain DSM 263 / NCIMB 8327) (Chlorobium vibrioforme subsp. thiosulfatophilum) protein is Probable transcriptional regulatory protein Cpar_0525.